The chain runs to 862 residues: MNLAIPNPNSHHLSFLIQNSSFIGNRRFADGNRLRFLSGGNRKPCSFSGKIKAKTKDLVLGNPSVSVEKGKYSYDVESLINKLSSLPPRGSIARCLDIFKNKLSLNDFALVFKEFAGRGDWQRSLRLFKYMQRQIWCKPNEHIYTIMISLLGREGLLDKCLEVFDEMPSQGVSRSVFSYTALINAYGRNGRYETSLELLDRMKNEKISPSILTYNTVINACARGGLDWEGLLGLFAEMRHEGIQPDIVTYNTLLSACAIRGLGDEAEMVFRTMNDGGIVPDLTTYSHLVETFGKLRRLEKVCDLLGEMASGGSLPDITSYNVLLEAYAKSGSIKEAMGVFHQMQAAGCTPNANTYSVLLNLFGQSGRYDDVRQLFLEMKSSNTDPDAATYNILIEVFGEGGYFKEVVTLFHDMVEENIEPDMETYEGIIFACGKGGLHEDARKILQYMTANDIVPSSKAYTGVIEAFGQAALYEEALVAFNTMHEVGSNPSIETFHSLLYSFARGGLVKESEAILSRLVDSGIPRNRDTFNAQIEAYKQGGKFEEAVKTYVDMEKSRCDPDERTLEAVLSVYSFARLVDECREQFEEMKASDILPSIMCYCMMLAVYGKTERWDDVNELLEEMLSNRVSNIHQVIGQMIKGDYDDDSNWQIVEYVLDKLNSEGCGLGIRFYNALLDALWWLGQKERAARVLNEATKRGLFPELFRKNKLVWSVDVHRMSEGGMYTALSVWLNDINDMLLKGDLPQLAVVVSVRGQLEKSSAARESPIAKAAFSFLQDHVSSSFSFTGWNGGRIMCQRSQLKQLLSTKEPTSEESENKNLVALANSPIFAAGTRASTSSDTNHSGNPTQRRTRTKKELAGSTA.

The transit peptide at 1 to 66 (MNLAIPNPNS…DLVLGNPSVS (66 aa)) directs the protein to the chloroplast. 15 PPR repeats span residues 104–139 (SLNDFALVFKEFAGRGDWQRSLRLFKYMQRQIWCKP), 140–174 (NEHIYTIMISLLGREGLLDKCLEVFDEMPSQGVSR), 175–209 (SVFSYTALINAYGRNGRYETSLELLDRMKNEKISP), 210–245 (SILTYNTVINACARGGLDWEGLLGLFAEMRHEGIQP), 246–280 (DIVTYNTLLSACAIRGLGDEAEMVFRTMNDGGIVP), 281–315 (DLTTYSHLVETFGKLRRLEKVCDLLGEMASGGSLP), 316–350 (DITSYNVLLEAYAKSGSIKEAMGVFHQMQAAGCTP), 351–385 (NANTYSVLLNLFGQSGRYDDVRQLFLEMKSSNTDP), 386–420 (DAATYNILIEVFGEGGYFKEVVTLFHDMVEENIEP), 421–455 (DMETYEGIIFACGKGGLHEDARKILQYMTANDIVP), 456–490 (SSKAYTGVIEAFGQAALYEEALVAFNTMHEVGSNP), 491–525 (SIETFHSLLYSFARGGLVKESEAILSRLVDSGIPR), 526–560 (NRDTFNAQIEAYKQGGKFEEAVKTYVDMEKSRCDP), 561–595 (DERTLEAVLSVYSFARLVDECREQFEEMKASDILP), and 596–630 (SIMCYCMMLAVYGKTERWDDVNELLEEMLSNRVSN). The 89-residue stretch at 713 to 801 (VDVHRMSEGG…RIMCQRSQLK (89 aa)) folds into the Smr domain. A disordered region spans residues 831 to 862 (GTRASTSSDTNHSGNPTQRRTRTKKELAGSTA). A compositionally biased stretch (polar residues) spans 833–848 (RASTSSDTNHSGNPTQ).

The protein belongs to the PPR family. P subfamily. Mostly expressed in leaves, stems and flowers, but barely in roots.

It localises to the plastid. The protein localises to the chloroplast. Functionally, involved in plastid gene expression. The polypeptide is Pentatricopeptide repeat-containing protein At1g74850, chloroplastic (PTAC2) (Arabidopsis thaliana (Mouse-ear cress)).